The chain runs to 70 residues: Cecropin-P1 (70 aa).

Positions 1 to 13 (MFLIYLFVQTAES) are cleaved as a signal peptide. Residues 45 to 70 (RRRFVAEQDAIHSRVSREVPTLSDSV) constitute a propeptide, removed in mature form.

As to expression, expressed in the body wall, intestine, uterus and ovary.

The protein localises to the secreted. Functionally, has antibacterial activity against several Gram-positive and Gram-negative bacteria. Is weakly active against yeasts. Acts by a nonpore mechanism. The chain is Cecropin-P1 (ASCEC-1) from Ascaris suum (Pig roundworm).